The primary structure comprises 100 residues: Large ribosomal subunit protein bL21 (100 aa).

It belongs to the bacterial ribosomal protein bL21 family. Part of the 50S ribosomal subunit. Contacts protein L20.

This protein binds to 23S rRNA in the presence of protein L20. This chain is Large ribosomal subunit protein bL21, found in Corynebacterium urealyticum (strain ATCC 43042 / DSM 7109).